The sequence spans 550 residues: Calcium-dependent protein kinase 20 (550 aa).

The disordered stretch occupies residues 1-58 (MGNCCVTPEGSGRGRKKQQQEQKQKQKEPKQQQQQQKKGKKPNPFSIEYNRSSAPSGH). The N-myristoyl glycine moiety is linked to residue Gly-2. The span at 18–30 (QQQEQKQKQKEPK) shows a compositional bias: basic and acidic residues. One can recognise a Protein kinase domain in the interval 75–333 (YELGGELGRG…AQQVLDHPWL (259 aa)). ATP is bound by residues 81-89 (LGRGEFGVT) and Lys-104. Asp-199 serves as the catalytic Proton acceptor. An autoinhibitory domain region spans residues 339 to 369 (APNVNLGETVKARLQQFSVMNKFKKHALRVI). EF-hand domains lie at 376 to 411 (EEVA…LGHQ), 412 to 447 (MADA…LRKI), 448 to 483 (GNDE…DLGA), and 484 to 519 (NHEE…GTDW). Positions 389, 391, 393, 395, 400, 425, 427, 429, 431, 436, 461, 463, 465, 467, 472, 497, 499, 501, 503, and 508 each coordinate Ca(2+).

This sequence belongs to the protein kinase superfamily. Ser/Thr protein kinase family. CDPK subfamily. In terms of tissue distribution, expressed in roots and leaf blades.

The protein localises to the membrane. The catalysed reaction is L-seryl-[protein] + ATP = O-phospho-L-seryl-[protein] + ADP + H(+). The enzyme catalyses L-threonyl-[protein] + ATP = O-phospho-L-threonyl-[protein] + ADP + H(+). Activated by calcium. Autophosphorylation may play an important role in the regulation of the kinase activity. In terms of biological role, may play a role in signal transduction pathways that involve calcium as a second messenger. The sequence is that of Calcium-dependent protein kinase 20 from Oryza sativa subsp. japonica (Rice).